The primary structure comprises 481 residues: Exodeoxyribonuclease I (481 aa).

Positions 12–193 (LFYDYETFGK…SSDVYATMNI (182 aa)) constitute an Exonuclease domain. Mg(2+) is bound by residues Asp-15, Glu-17, and Asp-186. Position 17 (Glu-17) interacts with substrate. The ExoI SH3-like domain maps to 202-350 (PKLFNFFFKY…KLKKFLCSIA (149 aa)). An ExoI C-terminal domain is found at 356–471 (NGSNVDLKMY…ELFEYVKYTR (116 aa)).

As to quaternary structure, monomer. Interacts with ssb (via C-terminus); this interaction stimulates the exonuclease activity by recruiting the enzyme to its substrate. The cofactor is Mg(2+).

The enzyme catalyses Exonucleolytic cleavage in the 3'- to 5'-direction to yield nucleoside 5'-phosphates.. In terms of biological role, degrades single-stranded DNA (ssDNA) in a highly processive manner. Also functions as a DNA deoxyribophosphodiesterase that releases deoxyribose-phosphate moieties following the cleavage of DNA at an apurinic/apyrimidinic (AP) site by either an AP endonuclease or AP lyase. The polypeptide is Exodeoxyribonuclease I (sbcB) (Buchnera aphidicola subsp. Baizongia pistaciae (strain Bp)).